Reading from the N-terminus, the 86-residue chain is Photosystem I reaction center subunit PsaK (86 aa).

Helical transmembrane passes span 15-35 (SWSI…IGLG) and 57-77 (GLPE…GAII).

The protein belongs to the PsaG/PsaK family.

It localises to the plastid. It is found in the chloroplast thylakoid membrane. The polypeptide is Photosystem I reaction center subunit PsaK (Gracilaria tenuistipitata var. liui (Red alga)).